An 836-amino-acid polypeptide reads, in one-letter code: ATP-binding cassette sub-family B member 6 (836 aa).

The Lumenal portion of the chain corresponds to 1–26 (MVTVGNYCEAEGPAGPAWTQNGLSPC). The required for the lysosomal targeting stretch occupies residues 1-205 (MVTVGNYCEA…SGGLFILGLW (205 aa)). The tract at residues 1-236 (MVTVGNYCEA…RNQGRSTDPR (236 aa)) is required for ATPase activity. A disulfide bond links Cys-8 and Cys-26. The chain crosses the membrane as a helical span at residues 27–47 (FFYTLVPSTLMTLGVLALVLV). Residues 48–72 (LPCRRREVPAGTEELSWAAGPRVAP) lie on the Cytoplasmic side of the membrane. Residues 73–93 (YALQLSLAILQMALPLASLAG) traverse the membrane as a helical segment. The Lumenal portion of the chain corresponds to 94–106 (RVGTARGVRLPGY). A helical transmembrane segment spans residues 107 to 127 (LLLASVLESLASACGLWLLVV). The Cytoplasmic segment spans residues 128–147 (ERSQARQSLAMGVWMKFRHS). The helical transmembrane segment at 148–168 (LGLLLLWTVTFAAENLVLVSW) threads the bilayer. Residues 169 to 185 (NSPQWWWSRADLGQQVQ) are Lumenal-facing. Residues 186 to 206 (FGLWVLRYMTSGGLFILGLWA) form a helical membrane-spanning segment. At 207–264 (PGLRPQSYTLHVNEEDQDGGRNQGRSTDPRSTWRDLGRKLRLLSGYLWPRGSPSLQLT) the chain is on the cytoplasmic side. A helical transmembrane segment spans residues 265–285 (VLLCMGLMGLDRALNVLVPIF). The region spanning 265–556 (VLLCMGLMGL…FGTYYRMIQT (292 aa)) is the ABC transmembrane type-1 domain. Residues 286–305 (YRDIVNLLTSKAPWSSLAWT) lie on the Lumenal side of the membrane. Residues 306-326 (VTTYVFLKFLQGGGTGSTGFV) form a helical membrane-spanning segment. Residues 327–375 (SNLRTFLWIRVQQFTSRGVELRLFSHLHELSLRWHLGRRTGEVLRIVDR) are Cytoplasmic-facing. A helical membrane pass occupies residues 376-396 (GTSSVTGLLSYLVFNIIPTLA). Asp-397 is a topological domain (lumenal). The chain crosses the membrane as a helical span at residues 398–418 (IIIGIIYFSMFFNAWFGLIVF). Topologically, residues 419–499 (LCMSLYLILT…STASLVLLNQ (81 aa)) are cytoplasmic. The chain crosses the membrane as a helical span at residues 500 to 520 (TQNMVIGFGLLAGSLLCAYFV). The Lumenal portion of the chain corresponds to 521 to 529 (SERRLQVGD). The chain crosses the membrane as a helical span at residues 530 to 550 (FVLFGTYITQLYMPLNWFGTY). Residues 551-836 (YRMIQTNFID…QGQETVPEDS (286 aa)) are Cytoplasmic-facing. One can recognise an ABC transporter domain in the interval 590 to 824 (VEFENVHFSY…GGVYAEMWQL (235 aa)). ATP is bound by residues Tyr-599 and 623–634 (GPSGAGKSTILR).

It belongs to the ABC transporter superfamily. ABCB family. Heavy Metal importer (TC 3.A.1.210) subfamily. Homodimer. In terms of processing, N-glycosylated. Ubiquitously expressed. Highly expressed in testis by meiotic pachytene spermatocytes and post-meiotic early spermatids.

Its subcellular location is the cell membrane. The protein resides in the mitochondrion outer membrane. It localises to the endoplasmic reticulum membrane. It is found in the golgi apparatus membrane. The protein localises to the endosome membrane. Its subcellular location is the lysosome membrane. The protein resides in the late endosome membrane. It localises to the early endosome membrane. It is found in the secreted. The protein localises to the extracellular exosome. Its subcellular location is the mitochondrion. The protein resides in the endosome. It localises to the multivesicular body membrane. It is found in the melanosome membrane. The catalysed reaction is heme b(in) + ATP + H2O = heme b(out) + ADP + phosphate + H(+). The enzyme catalyses coproporphyrin III(in) + ATP + H2O = coproporphyrin III(out) + ADP + phosphate + H(+). It carries out the reaction pheophorbide a(in) + ATP + H2O = pheophorbide a(out) + ADP + phosphate + H(+). It catalyses the reaction coproporphyrinogen III(in) + ATP + H2O = coproporphyrinogen III(out) + ADP + phosphate + H(+). The catalysed reaction is protoporphyrin IX(in) + ATP + H2O = protoporphyrin IX(out) + ADP + phosphate + H(+). The enzyme catalyses coproporphyrin I(in) + ATP + H2O = coproporphyrin I(out) + ADP + phosphate + H(+). It carries out the reaction uroporphyrin I(in) + ATP + H2O = uroporphyrin I(out) + ADP + phosphate + H(+). It catalyses the reaction uroporphyrin III(in) + ATP + H2O = uroporphyrin III(out) + ADP + phosphate + H(+). Functionally, ATP-dependent transporter that catalyzes the transport of a broad-spectrum of porphyrins from the cytoplasm to the extracellular space through the plasma membrane or into the vesicle lumen. May also function as an ATP-dependent importer of porphyrins from the cytoplasm into the mitochondria, in turn may participate in the de novo heme biosynthesis regulation and in the coordination of heme and iron homeostasis during phenylhydrazine stress. May play a key role in the early steps of melanogenesis producing PMEL amyloid fibrils. In vitro, it confers to cells a resistance to toxic metal such as arsenic and cadmium and against chemotherapeutics agent such as 5-fluorouracil, SN-38 and vincristin. In addition may play a role in the transition metal homeostasis. This Rattus norvegicus (Rat) protein is ATP-binding cassette sub-family B member 6.